The chain runs to 310 residues: Ribose-phosphate pyrophosphokinase (310 aa).

Residues 34–36 (DQE) and 93–94 (RQ) contribute to the ATP site. Positions 127 and 167 each coordinate Mg(2+). Lys190 is an active-site residue. D-ribose 5-phosphate contacts are provided by residues Arg192, Asp216, and 220–224 (DSGGT).

The protein belongs to the ribose-phosphate pyrophosphokinase family. Class I subfamily. In terms of assembly, homohexamer. The cofactor is Mg(2+).

The protein localises to the cytoplasm. The enzyme catalyses D-ribose 5-phosphate + ATP = 5-phospho-alpha-D-ribose 1-diphosphate + AMP + H(+). It functions in the pathway metabolic intermediate biosynthesis; 5-phospho-alpha-D-ribose 1-diphosphate biosynthesis; 5-phospho-alpha-D-ribose 1-diphosphate from D-ribose 5-phosphate (route I): step 1/1. In terms of biological role, involved in the biosynthesis of the central metabolite phospho-alpha-D-ribosyl-1-pyrophosphate (PRPP) via the transfer of pyrophosphoryl group from ATP to 1-hydroxyl of ribose-5-phosphate (Rib-5-P). This Rhizobium meliloti (strain 1021) (Ensifer meliloti) protein is Ribose-phosphate pyrophosphokinase.